The primary structure comprises 206 residues: Small ribosomal subunit protein uS4 (206 aa).

The region spanning 98–176 is the S4 RNA-binding domain; sequence RRLDNVVYRL…APKWLEANRE (79 aa).

It belongs to the universal ribosomal protein uS4 family. As to quaternary structure, part of the 30S ribosomal subunit. Contacts protein S5. The interaction surface between S4 and S5 is involved in control of translational fidelity.

Its function is as follows. One of the primary rRNA binding proteins, it binds directly to 16S rRNA where it nucleates assembly of the body of the 30S subunit. With S5 and S12 plays an important role in translational accuracy. The protein is Small ribosomal subunit protein uS4 of Gloeobacter violaceus (strain ATCC 29082 / PCC 7421).